We begin with the raw amino-acid sequence, 61 residues long: Ferredoxin (61 aa).

The region spanning Leu-2–Glu-28 is the 4Fe-4S ferredoxin-type domain. 8 residues coordinate [4Fe-4S] cluster: Cys-8, Cys-11, Cys-14, Cys-18, Cys-37, Cys-40, Cys-49, and Cys-53.

[4Fe-4S] cluster serves as cofactor.

Functionally, ferredoxins are iron-sulfur proteins that transfer electrons in a wide variety of metabolic reactions. In Chlorobaculum thiosulfatiphilum (Chlorobium limicola f.sp. thiosulfatophilum), this protein is Ferredoxin.